We begin with the raw amino-acid sequence, 324 residues long: Acetyl-coenzyme A carboxylase carboxyl transferase subunit alpha (324 aa).

Residues Ile37–Gln291 form the CoA carboxyltransferase C-terminal domain.

The protein belongs to the AccA family. Acetyl-CoA carboxylase is a heterohexamer composed of biotin carboxyl carrier protein (AccB), biotin carboxylase (AccC) and two subunits each of ACCase subunit alpha (AccA) and ACCase subunit beta (AccD).

The protein resides in the cytoplasm. It carries out the reaction N(6)-carboxybiotinyl-L-lysyl-[protein] + acetyl-CoA = N(6)-biotinyl-L-lysyl-[protein] + malonyl-CoA. It participates in lipid metabolism; malonyl-CoA biosynthesis; malonyl-CoA from acetyl-CoA: step 1/1. Component of the acetyl coenzyme A carboxylase (ACC) complex. First, biotin carboxylase catalyzes the carboxylation of biotin on its carrier protein (BCCP) and then the CO(2) group is transferred by the carboxyltransferase to acetyl-CoA to form malonyl-CoA. This Bacillus cytotoxicus (strain DSM 22905 / CIP 110041 / 391-98 / NVH 391-98) protein is Acetyl-coenzyme A carboxylase carboxyl transferase subunit alpha.